The primary structure comprises 223 residues: Deoxyribose-phosphate aldolase (223 aa).

The Proton donor/acceptor role is filled by aspartate 91. The active-site Schiff-base intermediate with acetaldehyde is the lysine 153. The Proton donor/acceptor role is filled by lysine 182.

Belongs to the DeoC/FbaB aldolase family. DeoC type 1 subfamily.

The protein localises to the cytoplasm. The enzyme catalyses 2-deoxy-D-ribose 5-phosphate = D-glyceraldehyde 3-phosphate + acetaldehyde. It functions in the pathway carbohydrate degradation; 2-deoxy-D-ribose 1-phosphate degradation; D-glyceraldehyde 3-phosphate and acetaldehyde from 2-deoxy-alpha-D-ribose 1-phosphate: step 2/2. Functionally, catalyzes a reversible aldol reaction between acetaldehyde and D-glyceraldehyde 3-phosphate to generate 2-deoxy-D-ribose 5-phosphate. In Yersinia pseudotuberculosis serotype O:1b (strain IP 31758), this protein is Deoxyribose-phosphate aldolase.